The sequence spans 200 residues: ATP-dependent Clp protease proteolytic subunit (200 aa).

The Nucleophile role is filled by Ser99. Residue His124 is part of the active site.

It belongs to the peptidase S14 family. As to quaternary structure, fourteen ClpP subunits assemble into 2 heptameric rings which stack back to back to give a disk-like structure with a central cavity, resembling the structure of eukaryotic proteasomes.

Its subcellular location is the cytoplasm. The enzyme catalyses Hydrolysis of proteins to small peptides in the presence of ATP and magnesium. alpha-casein is the usual test substrate. In the absence of ATP, only oligopeptides shorter than five residues are hydrolyzed (such as succinyl-Leu-Tyr-|-NHMec, and Leu-Tyr-Leu-|-Tyr-Trp, in which cleavage of the -Tyr-|-Leu- and -Tyr-|-Trp bonds also occurs).. Its function is as follows. Cleaves peptides in various proteins in a process that requires ATP hydrolysis. Has a chymotrypsin-like activity. Plays a major role in the degradation of misfolded proteins. This chain is ATP-dependent Clp protease proteolytic subunit, found in Syntrophomonas wolfei subsp. wolfei (strain DSM 2245B / Goettingen).